We begin with the raw amino-acid sequence, 358 residues long: Src kinase-associated phosphoprotein 2 (358 aa).

Ser5 and Ser9 each carry phosphoserine. The homodimerization stretch occupies residues 14 to 64 (PEEIRNLLADVETFVADTLKGENLSKKAKEKRESLIKKIKDVKSVYLQEFQ). Tyr75 is subject to Phosphotyrosine. Ser87 and Ser90 each carry phosphoserine. One can recognise a PH domain in the interval 116 to 219 (FVIKAGYLEK…WVQQLKFILQ (104 aa)). Residues Tyr151 and Tyr197 each carry the phosphotyrosine modification. At Ser223 the chain carries Phosphoserine. The interval 232–292 (ERGELYDDVD…RDSVHHTSGD (61 aa)) is disordered. The segment covering 255 to 270 (IDDEIYEELPEEEEDT) has biased composition (acidic residues). At Tyr260 the chain carries Phosphotyrosine; by FYN. Phosphoserine occurs at positions 272, 282, and 285. Basic and acidic residues predominate over residues 274–292 (KMDEQGKGSRDSVHHTSGD). The SH3 domain occupies 296-357 (DYANFYQGLW…PKAYLMEMYD (62 aa)).

It belongs to the SKAP family. As to quaternary structure, interacts with LAT, GRB2, PTK2B and PRAM1. Homodimer. Interacts with FYB1, which is required for SKAP2 protein stability. Interacts with PTPNS1. Part of a complex consisting of SKAP2, FYB1 and PTPNS1. Part of a complex consisting of SKAP2, FYB1 and PIRB. May interact with actin. May interact with FYN, HCK and LYN. Interacts with FASLG. Dephosphorylated on Tyr-75 by PTPN22. Phosphorylated by FYN on Tyr-260. In case of infection with Y.pseudotuberculosis, dephosphorylated by bacterial phosphatase yopH. In terms of tissue distribution, expressed in kidney, lung, liver, spleen, bone marrow and testis. Present in T-cells, B-cells, and all cells of the myelomonocytic lineage. Present in all brain regions, with highest levels in neurons from the Purkinje cell layer, hippocampal gyrus, cortex and substantia nigra (at protein level).

The protein localises to the cytoplasm. Functionally, may be involved in B-cell and macrophage adhesion processes. In B-cells, may act by coupling the B-cell receptor (BCR) to integrin activation. May play a role in src signaling pathway. The chain is Src kinase-associated phosphoprotein 2 (Skap2) from Mus musculus (Mouse).